Here is a 72-residue protein sequence, read N- to C-terminus: N-alpha-acetyltransferase 38, NatC auxiliary subunit (72 aa).

One can recognise a Sm domain in the interval 3-72 (NGEILLTSWL…KHIKSFSVRA (70 aa)).

Component of the N-terminal acetyltransferase C (NatC) complex, composed of the catalytic subunit Naa30, a large auxiliary subunit Naa35 and a small auxiliary subunit Naa38.

Its subcellular location is the endoplasmic reticulum. Its function is as follows. Component of the NatC N-terminal acetyltransferase, which associates with the ribosome to acetylate nascent protein chains in a cotranslational manner. NatC acetylates protein N-termini starting with methionine, followed by a hydrophobic or amphipathic amino acid, with amino acids at positions 3 and 4 also contributing to NatC recognition. The first 4 amino acids of cognate substrates are recognized at the Naa30-Naa35 interface. NatC-dependent acetylation targets various substrate proteins to specific subcellular sites. The polypeptide is N-alpha-acetyltransferase 38, NatC auxiliary subunit (naa38) (Schizosaccharomyces pombe (strain 972 / ATCC 24843) (Fission yeast)).